Consider the following 253-residue polypeptide: Complement C1q subcomponent subunit B (253 aa).

Positions 1–25 (MKTQWGEVWTHLLLLLLGFLHVSWA) are cleaved as a signal peptide. Glutamine 26 is modified (pyrrolidone carboxylic acid). In terms of domain architecture, Collagen-like spans 29–112 (CTGPPGIPGI…GPRGPKGDSG (84 aa)). 4-hydroxyproline occurs at positions 33, 36, 39, 51, and 54. A disordered region spans residues 35–115 (IPGIPGVPGV…GPKGDSGDYG (81 aa)). Residues lysine 57 and lysine 60 each carry the 5-hydroxylysine modification. Proline 63 is modified (4-hydroxyproline). 5-hydroxylysine is present on lysine 75. Residues 78-96 (PGIPGTPGKVGPKGPVGPK) are compositionally biased toward low complexity. 2 positions are modified to 4-hydroxyproline: proline 81 and proline 84. A 5-hydroxylysine mark is found at lysine 90 and lysine 96. At proline 99 the chain carries 4-hydroxyproline. Lysine 108 is modified (5-hydroxylysine). One can recognise a C1q domain in the interval 115-253 (GATQKVAFSA…GFLLFPDMDA (139 aa)). Cysteine 179 and cysteine 198 are joined by a disulfide. Positions 199, 200, and 206 each coordinate Ca(2+).

In terms of assembly, core component of the complement C1 complex, a calcium-dependent complex composed of 1 molecule of the C1Q subcomplex, 2 molecules of C1R and 2 molecules of C1S. The C1Q subcomplex is composed 18 subunits: 3 chains of C1QA, C1QB, and C1QC trimerize to form 6 collagen-like triple helices connected to six globular ligand-recognition modules (C1q domain). Post-translationally, hydroxylated on lysine and proline residues. Hydroxylated lysine residues can be glycosylated. Mouse C1Q contains up to 64.0 hydroxylysine-galactosylglucose residues. Total percentage hydroxylysine residues glycosylated is 95.1%. Contains no hydroxylysine-monosaccharides. As to expression, highest expression in thioglycolate-activated peritoneal macrophages. Also found in spleen, thymus and heart. Very weak expression liver, kidney, lung and intestine.

The protein resides in the secreted. The protein localises to the cell surface. The C1Q subcomplex is inhibited by sulfated molecules, such as triterpenoid sulfates, heparan sulfate, or chondroitin sulfates. Functionally, core component of the complement C1 complex, a multiprotein complex that initiates the classical pathway of the complement system, a cascade of proteins that leads to phagocytosis and breakdown of pathogens and signaling that strengthens the adaptive immune system. The classical complement pathway is initiated by the C1Q subcomplex of the C1 complex, which specifically binds IgG or IgM immunoglobulins complexed with antigens, forming antigen-antibody complexes on the surface of pathogens: C1QA, together with C1QB and C1QC, specifically recognizes and binds the Fc regions of IgG or IgM via its C1q domain. Immunoglobulin-binding activates the proenzyme C1R, which cleaves C1S, initiating the proteolytic cascade of the complement system. The C1Q subcomplex is activated by a hexamer of IgG complexed with antigens, while it is activated by a pentameric IgM. The C1Q subcomplex also recognizes and binds phosphatidylserine exposed on the surface of cells undergoing programmed cell death, possibly promoting activation of the complement system. This is Complement C1q subcomponent subunit B from Mus musculus (Mouse).